We begin with the raw amino-acid sequence, 103 residues long: MIKKAFCMQVYPDQHAEYQRRHEKLWPEMRQMLKEHGAIKYQIFLNPETSTLFGYLEIEDEARWEQIALTPINQKWWNYMEDIMETNPDCSPMTAELKKVFEL.

Y18 provides a ligand contact to substrate. Residue H22 is the Proton donor of the active site. Residues Y41 and 76–77 each bind substrate; that span reads WW.

It belongs to the rhamnose mutarotase family. Homodimer.

It is found in the cytoplasm. It carries out the reaction alpha-L-rhamnose = beta-L-rhamnose. It functions in the pathway carbohydrate metabolism; L-rhamnose metabolism. In terms of biological role, involved in the anomeric conversion of L-rhamnose. This chain is L-rhamnose mutarotase, found in Enterococcus faecalis (strain ATCC 700802 / V583).